The following is a 238-amino-acid chain: Uridylate kinase (238 aa).

12-15 (KLSG) lines the ATP pocket. A UMP-binding site is contributed by glycine 54. Residues glycine 55 and arginine 59 each contribute to the ATP site. UMP is bound by residues aspartate 74 and 135-142 (TGNPFFTT). ATP-binding residues include threonine 162, asparagine 163, tyrosine 168, and aspartate 171.

It belongs to the UMP kinase family. As to quaternary structure, homohexamer.

It is found in the cytoplasm. The catalysed reaction is UMP + ATP = UDP + ADP. Its pathway is pyrimidine metabolism; CTP biosynthesis via de novo pathway; UDP from UMP (UMPK route): step 1/1. Inhibited by UTP. Catalyzes the reversible phosphorylation of UMP to UDP. This is Uridylate kinase from Rhodopseudomonas palustris (strain HaA2).